The primary structure comprises 209 residues: Na(+)-translocating NADH-quinone reductase subunit D (209 aa).

Transmembrane regions (helical) follow at residues 42–62 (LVMT…ISLI), 66–86 (IPGS…VIVV), 103–123 (VFVG…AYAM), 131–151 (FMDG…VGFL), and 178–198 (NGLF…IWGL).

This sequence belongs to the NqrDE/RnfAE family. In terms of assembly, composed of six subunits; NqrA, NqrB, NqrC, NqrD, NqrE and NqrF.

It is found in the cell inner membrane. It carries out the reaction a ubiquinone + n Na(+)(in) + NADH + H(+) = a ubiquinol + n Na(+)(out) + NAD(+). NQR complex catalyzes the reduction of ubiquinone-1 to ubiquinol by two successive reactions, coupled with the transport of Na(+) ions from the cytoplasm to the periplasm. NqrA to NqrE are probably involved in the second step, the conversion of ubisemiquinone to ubiquinol. The sequence is that of Na(+)-translocating NADH-quinone reductase subunit D from Proteus mirabilis (strain HI4320).